A 149-amino-acid chain; its full sequence is Transcriptional repressor NrdR (149 aa).

The segment at 3-34 (CPFCSAVDTKVIDSRLVGEGSSVRRRRQCLVC) is a zinc-finger region. The ATP-cone domain occupies 49–139 (PRVVKSNDVR…VYRSFEDIKE (91 aa)).

Belongs to the NrdR family. Zn(2+) is required as a cofactor.

Negatively regulates transcription of bacterial ribonucleotide reductase nrd genes and operons by binding to NrdR-boxes. The polypeptide is Transcriptional repressor NrdR (Enterobacter sp. (strain 638)).